The chain runs to 443 residues: 23S rRNA (uracil(1939)-C(5))-methyltransferase RlmD (443 aa).

The 63-residue stretch at 4 to 66 folds into the TRAM domain; it reads QNRFDRTSFQ…RHFDEARVVE (63 aa). Residues Cys79, Cys85, Cys88, and Cys167 each contribute to the [4Fe-4S] cluster site. S-adenosyl-L-methionine contacts are provided by Gln275, Phe304, Asn309, Glu325, Asp352, and Asp373. Cys399 acts as the Nucleophile in catalysis.

Belongs to the class I-like SAM-binding methyltransferase superfamily. RNA M5U methyltransferase family. RlmD subfamily.

It carries out the reaction uridine(1939) in 23S rRNA + S-adenosyl-L-methionine = 5-methyluridine(1939) in 23S rRNA + S-adenosyl-L-homocysteine + H(+). In terms of biological role, catalyzes the formation of 5-methyl-uridine at position 1939 (m5U1939) in 23S rRNA. This Xylella fastidiosa (strain 9a5c) protein is 23S rRNA (uracil(1939)-C(5))-methyltransferase RlmD.